Reading from the N-terminus, the 344-residue chain is DNA-directed RNA polymerase subunit alpha (344 aa).

The alpha N-terminal domain (alpha-NTD) stretch occupies residues Met1–Glu246. The tract at residues Glu259–Glu344 is alpha C-terminal domain (alpha-CTD).

Belongs to the RNA polymerase alpha chain family. Homodimer. The RNAP catalytic core consists of 2 alpha, 1 beta, 1 beta' and 1 omega subunit. When a sigma factor is associated with the core the holoenzyme is formed, which can initiate transcription.

The catalysed reaction is RNA(n) + a ribonucleoside 5'-triphosphate = RNA(n+1) + diphosphate. Its function is as follows. DNA-dependent RNA polymerase catalyzes the transcription of DNA into RNA using the four ribonucleoside triphosphates as substrates. This Borrelia garinii subsp. bavariensis (strain ATCC BAA-2496 / DSM 23469 / PBi) (Borreliella bavariensis) protein is DNA-directed RNA polymerase subunit alpha.